A 137-amino-acid chain; its full sequence is Universal stress protein HP_0031 (137 aa).

It belongs to the universal stress protein A family.

This chain is Universal stress protein HP_0031, found in Helicobacter pylori (strain ATCC 700392 / 26695) (Campylobacter pylori).